Reading from the N-terminus, the 125-residue chain is Large ribosomal subunit protein bL17 (125 aa).

It belongs to the bacterial ribosomal protein bL17 family. Part of the 50S ribosomal subunit. Contacts protein L32.

This is Large ribosomal subunit protein bL17 from Acinetobacter baumannii (strain AB0057).